Here is a 258-residue protein sequence, read N- to C-terminus: Imidazole glycerol phosphate synthase subunit HisF (258 aa).

Catalysis depends on residues Asp-11 and Asp-130.

This sequence belongs to the HisA/HisF family. Heterodimer of HisH and HisF.

It is found in the cytoplasm. The catalysed reaction is 5-[(5-phospho-1-deoxy-D-ribulos-1-ylimino)methylamino]-1-(5-phospho-beta-D-ribosyl)imidazole-4-carboxamide + L-glutamine = D-erythro-1-(imidazol-4-yl)glycerol 3-phosphate + 5-amino-1-(5-phospho-beta-D-ribosyl)imidazole-4-carboxamide + L-glutamate + H(+). It participates in amino-acid biosynthesis; L-histidine biosynthesis; L-histidine from 5-phospho-alpha-D-ribose 1-diphosphate: step 5/9. In terms of biological role, IGPS catalyzes the conversion of PRFAR and glutamine to IGP, AICAR and glutamate. The HisF subunit catalyzes the cyclization activity that produces IGP and AICAR from PRFAR using the ammonia provided by the HisH subunit. The protein is Imidazole glycerol phosphate synthase subunit HisF of Citrobacter koseri (strain ATCC BAA-895 / CDC 4225-83 / SGSC4696).